The following is a 461-amino-acid chain: MDQSNRYANLNLTEKDLIAGGRHVLCAYIMKPKAGFGNFLQTAAHFAAESSTGTNVEVSTTDDFTRGVDALVYEIDEAKQLMKIAYPIDLFDRNIIDGRAMIASFLTLTIGNNQGMGDVEYAKMYDFYVPPAYLKLFDGPSTTIKDLWRVLGRPVVDGGFIVGTIIKPKLGLRPQPFANACYDFWLGGDFIKNDEPQGNQVFAPFKETVRLVNDAMRRAQDKTGQPKLFSFNITADDHHEMVARGEYILETFADNADHIAFLVDGYVAGPAAVTTARRRFPKQYLHYHRAGHGAVTSPQAKRGYTAFVLSKMARLQGASGIHTGTMGFGKMEGEAADRAMAYMITEDSADGPYFHQEWLGMNPTTPIISGGMNALRMPGFFKNLGHSNLIMTAGGGAFGHIDGGAAGAKSLRQAEQCWKEGADPVAFAKEHREFARAFESFPHDADALYPNWRGQLGLAAA.

Asn112 serves as a coordination point for substrate. The active-site Proton acceptor is Lys167. Position 169 (Lys169) interacts with substrate. Mg(2+) is bound by residues Lys192, Asp194, and Glu195. The residue at position 192 (Lys192) is an N6-carboxylysine. The Proton acceptor role is filled by His288. Residues Arg289, His322, and Ser369 each contribute to the substrate site.

This sequence belongs to the RuBisCO large chain family. Type II subfamily. As to quaternary structure, homodimer. It depends on Mg(2+) as a cofactor.

It carries out the reaction 2 (2R)-3-phosphoglycerate + 2 H(+) = D-ribulose 1,5-bisphosphate + CO2 + H2O. It catalyses the reaction D-ribulose 1,5-bisphosphate + O2 = 2-phosphoglycolate + (2R)-3-phosphoglycerate + 2 H(+). RuBisCO catalyzes two reactions: the carboxylation of D-ribulose 1,5-bisphosphate, the primary event in carbon dioxide fixation, as well as the oxidative fragmentation of the pentose substrate. Both reactions occur simultaneously and in competition at the same active site. In Rhodopseudomonas palustris (strain BisB18), this protein is Ribulose bisphosphate carboxylase.